The following is a 92-amino-acid chain: Bombyxin A-1 (92 aa).

The N-terminal stretch at 1 to 19 (MKILLAIALMLSTVMWVST) is a signal peptide. The residue at position 20 (Gln-20) is a Pyrrolidone carboxylic acid. Disulfide bonds link Cys-29-Cys-79, Cys-41-Cys-92, and Cys-78-Cys-83. Positions 50–70 (SGAQFASYGSAWLMPYSEGRG) are cleaved as a propeptide — c peptide like.

This sequence belongs to the insulin family. Heterodimer of a B chain and an A chain linked by two disulfide bonds.

It localises to the secreted. Its function is as follows. Brain peptide responsible for activation of prothoracic glands to produce ecdysone in insects. This chain is Bombyxin A-1 (BBXA1), found in Bombyx mori (Silk moth).